Reading from the N-terminus, the 83-residue chain is SPbeta prophage-derived uncharacterized protein YopE (83 aa).

The next 2 helical transmembrane spans lie at 5–25 (AYFL…FIFV) and 60–80 (VIAF…TKLF).

Its subcellular location is the cell membrane. This is SPbeta prophage-derived uncharacterized protein YopE (yopE) from Bacillus subtilis (strain 168).